We begin with the raw amino-acid sequence, 281 residues long: Nucleoid occlusion protein (281 aa).

Residues 1 to 26 are disordered; the sequence is MKHPFSRLFSFGEKEQEEAGGKQERE. Positions 12-26 are enriched in basic and acidic residues; the sequence is GEKEQEEAGGKQERE. The segment at residues 145–164 is a DNA-binding region (H-T-H motif); the sequence is EALAQRLGKGQSTIANKLRL.

Belongs to the ParB family.

The protein localises to the cytoplasm. The protein resides in the nucleoid. Effects nucleoid occlusion by binding relatively nonspecifically to DNA and preventing the assembly of the division machinery in the vicinity of the nucleoid, especially under conditions that disturb the cell cycle. It helps to coordinate cell division and chromosome segregation by preventing the formation of the Z ring through the nucleoid, which would cause chromosome breakage. The sequence is that of Nucleoid occlusion protein from Geobacillus thermodenitrificans (strain NG80-2).